The chain runs to 242 residues: MNSSSNEKNKDLNRKNFSSKTDSSNNKAVVLLSGGLDSTTCLYQAIADGKEIQALSFDYGQRHKIELSYAKKVTRKLGIPHTIQKLKPELFLGSSLTQKSLHVPKNSLRKEEIPNTYVPGRNILFLSFAVSLAEGTGSDSIYIGVNSMDYSGYPDCRPEFIKMFEMAIQLGTKKGSQGPSIKILTPLQNLSKKEIVLLGNQLKVPFHLTFSCYDPKNGKACGKCDACLLRKKGFQETGVSEK.

The interval M1–D22 is disordered. L32–L42 contributes to the ATP binding site. Zn(2+)-binding residues include C212, C221, C224, and C227.

The protein belongs to the QueC family. It depends on Zn(2+) as a cofactor.

It catalyses the reaction 7-carboxy-7-deazaguanine + NH4(+) + ATP = 7-cyano-7-deazaguanine + ADP + phosphate + H2O + H(+). It functions in the pathway purine metabolism; 7-cyano-7-deazaguanine biosynthesis. Functionally, catalyzes the ATP-dependent conversion of 7-carboxy-7-deazaguanine (CDG) to 7-cyano-7-deazaguanine (preQ(0)). This chain is 7-cyano-7-deazaguanine synthase, found in Leptospira interrogans serogroup Icterohaemorrhagiae serovar copenhageni (strain Fiocruz L1-130).